A 695-amino-acid chain; its full sequence is Rho-related BTB domain-containing protein 1 (695 aa).

Positions 1-210 (MDSDMDYERP…DNAIRAALIS (210 aa)) are rho-like. GTP-binding positions include 21–28 (GDNAVGKT), 84–88 (DTFGD), and 140–143 (CQLD). BTB domains are found at residues 266-426 (ADVL…DEKE) and 484-551 (SDVT…SPNL). The segment at 325–351 (SLGSAEEGKEGPQRTPQADPGASSGQD) is disordered.

Belongs to the small GTPase superfamily. Rho family. In terms of tissue distribution, highest expression in heart and testis.

In Mus musculus (Mouse), this protein is Rho-related BTB domain-containing protein 1 (Rhobtb1).